Consider the following 110-residue polypeptide: MSDAAVDTSSEITTKDLKEKKEVVEEAENGRDVPANGNANEENGEQEADNEVDEEEEEGGEEEEEEEEGDGEEEDGDEDEEAESATGKRAAEDDEDDDVDTKKQKTDEDD.

An N-acetylmethionine modification is found at methionine 1. A disordered region spans residues 1 to 110 (MSDAAVDTSS…TKKQKTDEDD (110 aa)). Position 2 is an N-acetylserine; in Prothymosin alpha, N-terminally processed (serine 2). At serine 2 the chain carries Phosphoserine. Threonine 8 carries the phosphothreonine modification. Phosphoserine is present on residues serine 9 and serine 10. Threonine 13 and threonine 14 each carry phosphothreonine. The segment covering 13-31 (TTKDLKEKKEVVEEAENGR) has biased composition (basic and acidic residues). Lysine 15 carries the N6-acetyllysine; alternate modification. Lysine 15 bears the N6-succinyllysine; alternate mark. Positions 42–83 (ENGEQEADNEVDEEEEEGGEEEEEEEEGDGEEEDGDEDEEAE) are enriched in acidic residues. Over residues 100 to 110 (DTKKQKTDEDD) the composition is skewed to basic and acidic residues. Threonine 101 bears the Phosphothreonine mark. Residue lysine 102 is modified to N6-acetyllysine; alternate. Lysine 102 participates in a covalent cross-link: Glycyl lysine isopeptide (Lys-Gly) (interchain with G-Cter in SUMO2); alternate. Residue threonine 106 is modified to Phosphothreonine.

It belongs to the pro/parathymosin family. As to quaternary structure, interacts with NUPR1; regulates apoptotic process. In terms of processing, covalently linked to a small RNA of about 20 nucleotides.

Its subcellular location is the nucleus. In terms of biological role, prothymosin alpha may mediate immune function by conferring resistance to certain opportunistic infections. The protein is Prothymosin alpha (PTMA) of Pongo abelii (Sumatran orangutan).